Here is a 245-residue protein sequence, read N- to C-terminus: tRNA (guanine-N(1)-)-methyltransferase (245 aa).

Residues G112 and 132-137 (IGDFVL) contribute to the S-adenosyl-L-methionine site.

Belongs to the RNA methyltransferase TrmD family. Homodimer.

It localises to the cytoplasm. The enzyme catalyses guanosine(37) in tRNA + S-adenosyl-L-methionine = N(1)-methylguanosine(37) in tRNA + S-adenosyl-L-homocysteine + H(+). Functionally, specifically methylates guanosine-37 in various tRNAs. This Geobacter sulfurreducens (strain ATCC 51573 / DSM 12127 / PCA) protein is tRNA (guanine-N(1)-)-methyltransferase.